Reading from the N-terminus, the 847-residue chain is Putative membrane protein SCO5905 (847 aa).

12 helical membrane-spanning segments follow: residues alanine 18–leucine 38, glycine 187–isoleucine 207, leucine 215–leucine 235, alanine 248–alanine 268, isoleucine 302–proline 322, leucine 326–leucine 346, valine 381–tyrosine 401, aspartate 539–leucine 559, leucine 562–alanine 582, valine 600–methionine 620, threonine 643–threonine 663, and phenylalanine 672–valine 692. A disordered region spans residues arginine 708 to alanine 729. Transmembrane regions (helical) follow at residues phenylalanine 744–leucine 764, phenylalanine 778–isoleucine 798, and threonine 808–alanine 828.

The protein belongs to the resistance-nodulation-cell division (RND) (TC 2.A.6) family. MmpL subfamily.

It localises to the cell membrane. The polypeptide is Putative membrane protein SCO5905 (Streptomyces coelicolor (strain ATCC BAA-471 / A3(2) / M145)).